Reading from the N-terminus, the 475-residue chain is tRNA-2-methylthio-N(6)-dimethylallyladenosine synthase (475 aa).

The disordered stretch occupies residues 1-20; the sequence is MEQNLTTERSETSSSRAGTA. The MTTase N-terminal domain occupies 25 to 145; that stretch reads KKVFVKTYGC…LPSVVTRARA (121 aa). Residues C34, C70, C108, C186, C190, and C193 each coordinate [4Fe-4S] cluster. Positions 172–404 constitute a Radical SAM core domain; it reads RSRGVTAFLT…QALLAEQQRA (233 aa). Positions 407 to 469 constitute a TRAM domain; it reads ESLVGTEIDL…GHSLFCEPAG (63 aa).

The protein belongs to the methylthiotransferase family. MiaB subfamily. As to quaternary structure, monomer. It depends on [4Fe-4S] cluster as a cofactor.

The protein resides in the cytoplasm. The catalysed reaction is N(6)-dimethylallyladenosine(37) in tRNA + (sulfur carrier)-SH + AH2 + 2 S-adenosyl-L-methionine = 2-methylsulfanyl-N(6)-dimethylallyladenosine(37) in tRNA + (sulfur carrier)-H + 5'-deoxyadenosine + L-methionine + A + S-adenosyl-L-homocysteine + 2 H(+). In terms of biological role, catalyzes the methylthiolation of N6-(dimethylallyl)adenosine (i(6)A), leading to the formation of 2-methylthio-N6-(dimethylallyl)adenosine (ms(2)i(6)A) at position 37 in tRNAs that read codons beginning with uridine. The polypeptide is tRNA-2-methylthio-N(6)-dimethylallyladenosine synthase (Chelativorans sp. (strain BNC1)).